Consider the following 530-residue polypeptide: GATA zinc finger domain-containing protein 4 (530 aa).

2 disordered regions span residues Met-1–Asn-27 and Ser-212–Asn-386. 3 stretches are compositionally biased toward low complexity: residues Asn-7–Asn-17, Ser-216–Asn-290, and Asn-299–Asn-386. Residues Cys-494–Cys-518 form a GATA-type zinc finger.

The polypeptide is GATA zinc finger domain-containing protein 4 (gtaD) (Dictyostelium discoideum (Social amoeba)).